Here is a 668-residue protein sequence, read N- to C-terminus: WD repeat-containing protein 48 homolog (668 aa).

WD repeat units lie at residues 26–65, 71–110, 113–152, 164–203, 206–245, 248–287, 290–329, and 350–389; these read QHRN…SEKY, HHND…CMST, THRD…ALTA, GSKD…RRMK, GHTE…CVQT, VHKE…NKTL, EEQA…RCTL, and KGGA…KKEQ. The segment at 592 to 616 is disordered; it reads ETTPSGGNANNSLQNSQSDANSEGS.

Belongs to the WD repeat WDR48 family. As to quaternary structure, catalytic component of the Usp12-46 deubiquitylase complex consisting of Usp12-46, Wdr20 and Uaf1; regulatory subunit that, together wtih Wdr20, stabilizes Usp12-46. The Usp12-46 deubiquitylase complex associates with arr/arrow; the interaction leads to deubiquitination and stabilization of arr/arrow.

Regulatory component of the Usp12-46 deubiquitylase complex. activates deubiquitination by increasing the catalytic turnover without increasing the affinity of deubiquitinating enzymes for the substrate. The complex deubiquitylates the wg/wingless-signaling receptor arr/arrow, which stabilizes the receptor and increases its concentration at the cell surface; this enhances the sensitivity of cells to wg/wingless-signal stimulation. This increases the amplitude and spatial range of the signaling response to the wg/wingless morphogen gradient, facilitating the precise concentration-dependent regulation of its target genes. Together with Wdr20 and Usp12-46 required for wg/wingless-mediated signaling in the wing imaginal disc and for wg/wingless-dependent regulation of intestinal stem cell proliferation. The sequence is that of WD repeat-containing protein 48 homolog from Drosophila melanogaster (Fruit fly).